The following is a 179-amino-acid chain: Large ribosomal subunit protein uL6 (179 aa).

The protein belongs to the universal ribosomal protein uL6 family. As to quaternary structure, part of the 50S ribosomal subunit.

Functionally, this protein binds to the 23S rRNA, and is important in its secondary structure. It is located near the subunit interface in the base of the L7/L12 stalk, and near the tRNA binding site of the peptidyltransferase center. This is Large ribosomal subunit protein uL6 from Chlorobium phaeobacteroides (strain BS1).